A 359-amino-acid polypeptide reads, in one-letter code: Probable isoaspartyl peptidase/L-asparaginase 3 (359 aa).

Thr-224 functions as the Nucleophile in the catalytic mechanism. Residues 252–255 (RVGD) and 275–278 (TGDG) contribute to the substrate site.

It belongs to the Ntn-hydrolase family. In terms of assembly, heterotetramer of two alpha and two beta chains arranged as a dimer of alpha/beta heterodimers. In terms of processing, cleaved into an alpha and beta chain by autocatalysis; this activates the enzyme. The N-terminal residue of the beta subunit is responsible for the nucleophile hydrolase activity.

The catalysed reaction is Cleavage of a beta-linked Asp residue from the N-terminus of a polypeptide.. Functionally, acts in asparagine catabolism but also in the final steps of protein degradation via hydrolysis of a range of isoaspartyl dipeptides. This is Probable isoaspartyl peptidase/L-asparaginase 3 from Arabidopsis thaliana (Mouse-ear cress).